The following is a 179-amino-acid chain: Transcription initiation factor TFIID subunit 10 (179 aa).

The segment at 1–23 is disordered; it reads MNDPEQYEPSSSTESVLMPPPAL.

Belongs to the TAF10 family. In terms of assembly, component of the TFIID basal transcription factor complex, composed of TATA-box-binding protein tbp-1, and a number of TBP-associated factors (TAFs).

The protein resides in the nucleus. Functionally, the TFIID basal transcription factor complex plays a major role in the initiation of RNA polymerase II (Pol II)-dependent transcription. TFIID recognizes and binds promoters via its subunit tbp-1, a TATA-box-binding protein, and promotes assembly of the pre-initiation complex (PIC). The TFIID complex consists of tbp-1 and TBP-associated factors (TAFs), including taf-10. Essential for early embryonic development, but not required for transcription of some genes; probably acts via activating transcription initiation by RNA Pol II, as part of the TFIID complex. The polypeptide is Transcription initiation factor TFIID subunit 10 (Caenorhabditis elegans).